We begin with the raw amino-acid sequence, 373 residues long: Glutamate 5-kinase (373 aa).

ATP is bound at residue lysine 15. 3 residues coordinate substrate: serine 55, aspartate 142, and asparagine 154. 174–175 serves as a coordination point for ATP; that stretch reads TD. Positions 281–359 constitute a PUA domain; that stretch reads RGSVVLDDGA…SQIEAVLGYV (79 aa).

It belongs to the glutamate 5-kinase family.

It is found in the cytoplasm. The catalysed reaction is L-glutamate + ATP = L-glutamyl 5-phosphate + ADP. The protein operates within amino-acid biosynthesis; L-proline biosynthesis; L-glutamate 5-semialdehyde from L-glutamate: step 1/2. Functionally, catalyzes the transfer of a phosphate group to glutamate to form L-glutamate 5-phosphate. The chain is Glutamate 5-kinase from Nitrosomonas eutropha (strain DSM 101675 / C91 / Nm57).